Reading from the N-terminus, the 106-residue chain is Glycoprotein GP16 (106 aa).

Glycosylated.

It is found in the host cytoplasm. Its function is as follows. May be involved in formation or transport of the nucleocapsid-containing vesicles around the nuclear membrane. This is Glycoprotein GP16 (GP16) from Autographa californica nuclear polyhedrosis virus (AcMNPV).